We begin with the raw amino-acid sequence, 487 residues long: N-succinylglutamate 5-semialdehyde dehydrogenase (487 aa).

Residue 221–226 (GSSDTG) coordinates NAD(+). Catalysis depends on residues glutamate 244 and cysteine 278.

The protein belongs to the aldehyde dehydrogenase family. AstD subfamily.

It catalyses the reaction N-succinyl-L-glutamate 5-semialdehyde + NAD(+) + H2O = N-succinyl-L-glutamate + NADH + 2 H(+). It participates in amino-acid degradation; L-arginine degradation via AST pathway; L-glutamate and succinate from L-arginine: step 4/5. Catalyzes the NAD-dependent reduction of succinylglutamate semialdehyde into succinylglutamate. In Burkholderia cenocepacia (strain ATCC BAA-245 / DSM 16553 / LMG 16656 / NCTC 13227 / J2315 / CF5610) (Burkholderia cepacia (strain J2315)), this protein is N-succinylglutamate 5-semialdehyde dehydrogenase.